Consider the following 308-residue polypeptide: 11-beta-hydroxysteroid dehydrogenase-like 2 (308 aa).

The chain crosses the membrane as a helical; Signal-anchor for type II membrane protein span at residues 10–30; that stretch reads FLLPPLTISFLVLFYPFYLFT. Residues 53 to 79 and D104 each bind NADP(+); that span reads GASSGIGEHVAYEYAKKGAKLALVARR. S183 contributes to the substrate binding site. Residue Y196 is the Proton acceptor of the active site. Residues 196–200 and K200 contribute to the NADP(+) site; that span reads YSASK.

It belongs to the short-chain dehydrogenases/reductases (SDR) family.

It localises to the membrane. This Arabidopsis thaliana (Mouse-ear cress) protein is 11-beta-hydroxysteroid dehydrogenase-like 2 (HSD2).